Here is a 358-residue protein sequence, read N- to C-terminus: tRNA-specific 2-thiouridylase MnmA (358 aa).

Residues 8–15 and methionine 35 contribute to the ATP site; that span reads AMSGGVDS. The tract at residues 95–97 is interaction with target base in tRNA; it reads NPD. Catalysis depends on cysteine 100, which acts as the Nucleophile. A disulfide bridge connects residues cysteine 100 and cysteine 194. An ATP-binding site is contributed by glycine 124. Residues 144–146 are interaction with tRNA; that stretch reads KDQ. The active-site Cysteine persulfide intermediate is the cysteine 194. The interval 301–302 is interaction with tRNA; that stretch reads RY.

Belongs to the MnmA/TRMU family.

The protein localises to the cytoplasm. It carries out the reaction S-sulfanyl-L-cysteinyl-[protein] + uridine(34) in tRNA + AH2 + ATP = 2-thiouridine(34) in tRNA + L-cysteinyl-[protein] + A + AMP + diphosphate + H(+). Catalyzes the 2-thiolation of uridine at the wobble position (U34) of tRNA, leading to the formation of s(2)U34. The protein is tRNA-specific 2-thiouridylase MnmA of Chlamydia trachomatis serovar L2 (strain ATCC VR-902B / DSM 19102 / 434/Bu).